Here is a 359-residue protein sequence, read N- to C-terminus: Outer membrane protein P5 (359 aa).

Residues 1-21 form the signal peptide; the sequence is MKKTAIALVVAGLAAASVAQA. The next 8 membrane-spanning stretches (beta stranded) occupy residues 27–37, 64–75, 83–91, 110–121, 126–134, 164–173, 178–185, and 211–219; these read TFYAGVKAGQG, TFTYGVFGGYQI, LAAELGYDD, HGAYLSLKGSYE, LDVYGKAGV, GLFAVGAEYA, LAVRLEYQ, and CINAGISYR. Positions 233 to 359 constitute an OmpA-like domain; that stretch reads MVSKTFSLNS…RVEIAVNGTK (127 aa). Residues cysteine 332 and cysteine 344 are joined by a disulfide bond.

Belongs to the outer membrane OOP (TC 1.B.6) superfamily. OmpA family. In terms of assembly, monomer and homodimer.

The protein resides in the cell outer membrane. It localises to the fimbrium. In terms of biological role, acts as a fimbriae subunit, allowing adhesion to host cells. Functionally, with TolR probably plays a role in maintaining the position of the peptidoglycan cell wall in the periplasm. Acts as a porin with low permeability that allows slow penetration of small solutes; an internal gate slows down solute passage. This Haemophilus influenzae protein is Outer membrane protein P5.